The primary structure comprises 295 residues: 5'-adenylylsulfate reductase-like 6 (295 aa).

An N-terminal signal peptide occupies residues 1–22; the sequence is MEKKLTLLLLVVVVLFVNLTNA. The region spanning 23–161 is the Thioredoxin domain; it reads TVRVQICPRE…LVAFYTDVTG (139 aa). An N-linked (GlcNAc...) asparagine glycan is attached at Asn-136. A helical membrane pass occupies residues 208–228; it reads ATVFVLLRLLHLISPTMVVFV.

The protein localises to the membrane. The sequence is that of 5'-adenylylsulfate reductase-like 6 (APRL6) from Arabidopsis thaliana (Mouse-ear cress).